We begin with the raw amino-acid sequence, 159 residues long: 2-C-methyl-D-erythritol 2,4-cyclodiphosphate synthase (159 aa).

A divalent metal cation is bound by residues D10 and H12. Residues 10-12 and 36-37 contribute to the 4-CDP-2-C-methyl-D-erythritol 2-phosphate site; these read DVH and HS. H44 is a binding site for a divalent metal cation. Residues 58-60, 63-67, 134-137, and R144 each bind 4-CDP-2-C-methyl-D-erythritol 2-phosphate; these read DIG, FANTD, and TTNE.

The protein belongs to the IspF family. Homotrimer. Requires a divalent metal cation as cofactor.

It catalyses the reaction 4-CDP-2-C-methyl-D-erythritol 2-phosphate = 2-C-methyl-D-erythritol 2,4-cyclic diphosphate + CMP. Its pathway is isoprenoid biosynthesis; isopentenyl diphosphate biosynthesis via DXP pathway; isopentenyl diphosphate from 1-deoxy-D-xylulose 5-phosphate: step 4/6. Functionally, involved in the biosynthesis of isopentenyl diphosphate (IPP) and dimethylallyl diphosphate (DMAPP), two major building blocks of isoprenoid compounds. Catalyzes the conversion of 4-diphosphocytidyl-2-C-methyl-D-erythritol 2-phosphate (CDP-ME2P) to 2-C-methyl-D-erythritol 2,4-cyclodiphosphate (ME-CPP) with a corresponding release of cytidine 5-monophosphate (CMP). The sequence is that of 2-C-methyl-D-erythritol 2,4-cyclodiphosphate synthase from Cytophaga hutchinsonii (strain ATCC 33406 / DSM 1761 / CIP 103989 / NBRC 15051 / NCIMB 9469 / D465).